A 21-amino-acid polypeptide reads, in one-letter code: Dahlein-5.5 (21 aa).

In terms of tissue distribution, expressed by the skin dorsal glands.

It localises to the secreted. Its function is as follows. Has no antimicrobial activity. Strongly inhibits the formation of NO by neuronal nitric oxide synthase at micromolar concentrations. In Ranoidea dahlii (Dahl's aquatic frog), this protein is Dahlein-5.5.